The primary structure comprises 267 residues: Glutamate racemase (267 aa).

Substrate-binding positions include 10 to 11 and 42 to 43; these read DS and YG. Residue cysteine 73 is the Proton donor/acceptor of the active site. 74–75 lines the substrate pocket; that stretch reads NT. Cysteine 183 acts as the Proton donor/acceptor in catalysis. 184 to 185 contacts substrate; it reads TH.

Belongs to the aspartate/glutamate racemases family.

The catalysed reaction is L-glutamate = D-glutamate. It participates in cell wall biogenesis; peptidoglycan biosynthesis. In terms of biological role, provides the (R)-glutamate required for cell wall biosynthesis. In Lactobacillus acidophilus (strain ATCC 700396 / NCK56 / N2 / NCFM), this protein is Glutamate racemase.